Reading from the N-terminus, the 97-residue chain is Phosphoribosyl-ATP pyrophosphatase (97 aa).

The protein belongs to the PRA-PH family.

The protein resides in the cytoplasm. It carries out the reaction 1-(5-phospho-beta-D-ribosyl)-ATP + H2O = 1-(5-phospho-beta-D-ribosyl)-5'-AMP + diphosphate + H(+). It participates in amino-acid biosynthesis; L-histidine biosynthesis; L-histidine from 5-phospho-alpha-D-ribose 1-diphosphate: step 2/9. This Methanoculleus marisnigri (strain ATCC 35101 / DSM 1498 / JR1) protein is Phosphoribosyl-ATP pyrophosphatase.